Here is a 674-residue protein sequence, read N- to C-terminus: 1,4-alpha-glucan branching enzyme GlgB 1 (674 aa).

Asp-336 acts as the Nucleophile in catalysis. Residue Glu-389 is the Proton donor of the active site.

Belongs to the glycosyl hydrolase 13 family. GlgB subfamily. Monomer.

It carries out the reaction Transfers a segment of a (1-&gt;4)-alpha-D-glucan chain to a primary hydroxy group in a similar glucan chain.. It participates in glycan biosynthesis; glycogen biosynthesis. Its function is as follows. Catalyzes the formation of the alpha-1,6-glucosidic linkages in glycogen by scission of a 1,4-alpha-linked oligosaccharide from growing alpha-1,4-glucan chains and the subsequent attachment of the oligosaccharide to the alpha-1,6 position. This Clostridium perfringens (strain 13 / Type A) protein is 1,4-alpha-glucan branching enzyme GlgB 1 (glgB1).